Here is a 152-residue protein sequence, read N- to C-terminus: Large ribosomal subunit protein bL9 (152 aa).

This sequence belongs to the bacterial ribosomal protein bL9 family.

Its function is as follows. Binds to the 23S rRNA. This is Large ribosomal subunit protein bL9 from Saccharophagus degradans (strain 2-40 / ATCC 43961 / DSM 17024).